Consider the following 414-residue polypeptide: Probable indole-3-pyruvate monooxygenase YUCCA1 (414 aa).

Gly-25 to Gly-30 is an FAD binding site. Gly-189 to Gly-194 lines the NADP(+) pocket.

The protein belongs to the FMO family. Requires FAD as cofactor. In terms of tissue distribution, expressed in the apical meristems and young floral primordia. Detected in the floral meristems and at the base of the floral organs.

The catalysed reaction is indole-3-pyruvate + NADPH + O2 + H(+) = (indol-3-yl)acetate + CO2 + NADP(+) + H2O. The protein operates within plant hormone metabolism; auxin biosynthesis. Involved in auxin biosynthesis, but not in the tryptamine or the CYP79B2/B3 branches. Catalyzes in vitro the N-oxidation of tryptamine to form N-hydroxyl tryptamine. Involved during embryogenesis and seedling development. Required for the formation of floral organs and vascular tissues. Belongs to the set of redundant YUCCA genes probably responsible for auxin biosynthesis in shoots. The protein is Probable indole-3-pyruvate monooxygenase YUCCA1 (YUC1) of Arabidopsis thaliana (Mouse-ear cress).